Here is a 429-residue protein sequence, read N- to C-terminus: Alpha-galactosidase A (429 aa).

The first 31 residues, 1–31 (MQLRNPELHLGCALALRFLALVSWDIPGARA), serve as a signal peptide directing secretion. Disulfide bonds link cysteine 52/cysteine 94 and cysteine 56/cysteine 63. Asparagine 139 carries N-linked (GlcNAc...) asparagine glycosylation. A disulfide bond links cysteine 142 and cysteine 172. Aspartate 170 serves as the catalytic Nucleophile. Asparagine 192 is a glycosylation site (N-linked (GlcNAc...) asparagine). Cysteine 202 and cysteine 223 are disulfide-bonded. A substrate-binding site is contributed by 203–207 (EWPLY). N-linked (GlcNAc...) asparagine glycosylation is present at asparagine 215. Residue aspartate 231 is the Proton donor of the active site. Cysteine 378 and cysteine 382 form a disulfide bridge.

Belongs to the glycosyl hydrolase 27 family. In terms of assembly, homodimer.

It localises to the lysosome. It catalyses the reaction Hydrolysis of terminal, non-reducing alpha-D-galactose residues in alpha-D-galactosides, including galactose oligosaccharides, galactomannans and galactolipids.. The catalysed reaction is a globoside Gb3Cer (d18:1(4E)) + H2O = a beta-D-Gal-(1-&gt;4)-beta-D-Glc-(1&lt;-&gt;1)-Cer(d18:1(4E)) + D-galactose. It carries out the reaction a globoside Gb3Cer + H2O = a beta-D-galactosyl-(1-&gt;4)-beta-D-glucosyl-(1&lt;-&gt;1)-ceramide + D-galactose. With respect to regulation, galactosylgalactosylglucosylceramidase activity is stimulated by saposin B and ammonium chloride. Catalyzes the hydrolysis of glycosphingolipids and participates in their degradation in the lysosome. This chain is Alpha-galactosidase A, found in Homo sapiens (Human).